We begin with the raw amino-acid sequence, 154 residues long: Transcriptional repressor NrdR (154 aa).

The segment at 3 to 34 is a zinc-finger region; it reads CPFCTHPDTRVADSRLMEERNAVRRRRHCPNC. An ATP-cone domain is found at 49–139; it reads PAVIGPDKKR…LHKRFDNPAD (91 aa).

It belongs to the NrdR family. It depends on Zn(2+) as a cofactor.

Functionally, negatively regulates transcription of bacterial ribonucleotide reductase nrd genes and operons by binding to NrdR-boxes. The chain is Transcriptional repressor NrdR from Neisseria meningitidis serogroup A / serotype 4A (strain DSM 15465 / Z2491).